A 345-amino-acid chain; its full sequence is Small ribosomal subunit biogenesis GTPase RsgA (345 aa).

The segment at 1–36 (MSKNKLSKGQERRVQANHQRRLQQRERGAAHWDDQP) is disordered. Basic and acidic residues predominate over residues 23 to 34 (QQRERGAAHWDD). In terms of domain architecture, CP-type G spans 103 to 273 (RSVLTRPDVY…LIDSPGVREL (171 aa)). GTP is bound by residues 159 to 162 (NKID) and 213 to 221 (GQSGVGKSS). Residues cysteine 297, cysteine 302, histidine 304, and cysteine 310 each coordinate Zn(2+).

The protein belongs to the TRAFAC class YlqF/YawG GTPase family. RsgA subfamily. Monomer. Associates with 30S ribosomal subunit, binds 16S rRNA. Zn(2+) serves as cofactor.

The protein resides in the cytoplasm. Functionally, one of several proteins that assist in the late maturation steps of the functional core of the 30S ribosomal subunit. Helps release RbfA from mature subunits. May play a role in the assembly of ribosomal proteins into the subunit. Circularly permuted GTPase that catalyzes slow GTP hydrolysis, GTPase activity is stimulated by the 30S ribosomal subunit. This chain is Small ribosomal subunit biogenesis GTPase RsgA, found in Sodalis glossinidius (strain morsitans).